Reading from the N-terminus, the 42-residue chain is Crotamine-IV-2 (42 aa).

Disulfide bonds link Cys4–Cys37, Cys11–Cys31, and Cys19–Cys38.

This sequence belongs to the crotamine-myotoxin family. As to quaternary structure, monomer. As to expression, expressed by the venom gland.

The protein resides in the secreted. Its function is as follows. Cationic peptide that possesses multiple functions. It acts as a cell-penetrating peptide (CPP), and as a potent voltage-gated potassium channel (Kv) inhibitor. It exhibits antimicrobial activities, and hind limb paralysis. It also induces potent blockade of neuromuscular transmission in young chicken biventer cervicis preparation and potent myotoxic effect. In vivo, induces myonecrosis, upon intramuscular or subcutaneous injections into mice. The polypeptide is Crotamine-IV-2 (Crotalus durissus cumanensis (South American rattlesnake)).